We begin with the raw amino-acid sequence, 252 residues long: Probable transcriptional regulatory protein all4276 (252 aa).

This sequence belongs to the TACO1 family.

The protein resides in the cytoplasm. This Nostoc sp. (strain PCC 7120 / SAG 25.82 / UTEX 2576) protein is Probable transcriptional regulatory protein all4276.